The chain runs to 430 residues: Ribulose bisphosphate carboxylase (430 aa).

Residue lysine 160 is the Proton acceptor of the active site. Residue lysine 162 participates in substrate binding. Positions 186, 188, and 189 each coordinate Mg(2+). Position 186 is an N6-carboxylysine (lysine 186). Histidine 278 serves as the catalytic Proton acceptor. Residues arginine 279, histidine 311, 348–350 (SGG), and 370–373 (QAGG) each bind substrate.

Belongs to the RuBisCO large chain family. Type III subfamily. As to quaternary structure, homodimer or homodecamer. In contrast to form I RuBisCO, the form III RuBisCO is composed solely of large subunits. It depends on Mg(2+) as a cofactor.

The catalysed reaction is 2 (2R)-3-phosphoglycerate + 2 H(+) = D-ribulose 1,5-bisphosphate + CO2 + H2O. The enzyme catalyses D-ribulose 1,5-bisphosphate + O2 = 2-phosphoglycolate + (2R)-3-phosphoglycerate + 2 H(+). Its function is as follows. Catalyzes the addition of molecular CO(2) and H(2)O to ribulose 1,5-bisphosphate (RuBP), generating two molecules of 3-phosphoglycerate (3-PGA). Functions in an archaeal AMP degradation pathway, together with AMP phosphorylase and R15P isomerase. This Pyrococcus horikoshii (strain ATCC 700860 / DSM 12428 / JCM 9974 / NBRC 100139 / OT-3) protein is Ribulose bisphosphate carboxylase.